Here is a 121-residue protein sequence, read N- to C-terminus: MARIAGIDIPREKRVEIALTYVYGIGLTRSKLILANTGVNPDTRVKDLSDSDVQKLRGATEEFTLEGDLRRKEGMALKRLQDIGCVRGRRHRMSLPVRGQRTRTNARTRRGSRKTVAGRKK.

Positions 91 to 121 (HRMSLPVRGQRTRTNARTRRGSRKTVAGRKK) are disordered. Over residues 100-121 (QRTRTNARTRRGSRKTVAGRKK) the composition is skewed to basic residues.

The protein belongs to the universal ribosomal protein uS13 family. In terms of assembly, part of the 30S ribosomal subunit. Forms a loose heterodimer with protein S19. Forms two bridges to the 50S subunit in the 70S ribosome.

Functionally, located at the top of the head of the 30S subunit, it contacts several helices of the 16S rRNA. In the 70S ribosome it contacts the 23S rRNA (bridge B1a) and protein L5 of the 50S subunit (bridge B1b), connecting the 2 subunits; these bridges are implicated in subunit movement. Contacts the tRNAs in the A and P-sites. This Prochlorococcus marinus (strain MIT 9301) protein is Small ribosomal subunit protein uS13.